Here is a 273-residue protein sequence, read N- to C-terminus: Elongation factor Ts (273 aa).

The tract at residues 80–83 (TDFV) is involved in Mg(2+) ion dislocation from EF-Tu.

Belongs to the EF-Ts family.

The protein resides in the cytoplasm. Associates with the EF-Tu.GDP complex and induces the exchange of GDP to GTP. It remains bound to the aminoacyl-tRNA.EF-Tu.GTP complex up to the GTP hydrolysis stage on the ribosome. The protein is Elongation factor Ts of Tropheryma whipplei (strain Twist) (Whipple's bacillus).